The chain runs to 221 residues: Protein lethal(2)k10201 (221 aa).

2 C2H2-type zinc fingers span residues 74 to 97 (YSCVECRKMLPTAHLLDLHITEQH) and 113 to 138 (FSCFLEECTIKFHTARQRKDHCIITH). Positions 146–168 (FDHSKNRGKQKHQGKSKPNSMEV) are disordered. Residues 151–160 (NRGKQKHQGK) show a composition bias toward basic residues.

Functionally, vital for development. The sequence is that of Protein lethal(2)k10201 (l(2)k10201) from Drosophila melanogaster (Fruit fly).